A 377-amino-acid polypeptide reads, in one-letter code: MAKRDFYEVLGVERGASEADLKKAYRRLAMKYHPDRNPGDKEAEDKFKEANEAYEVLSDASKRAAYDQYGHAGVDPNMGGGAGAGFGGASFSDIFGDVFSDFFGGGGGRGGARGGAQRGADLRYTLDLDLEEAVRGTTVTIRVPTLVGCKTCNGSGAKPGTTPVTCTTCGGIGQVRMQQGFFSVQQTCPRCHGTGKMISDPCGSCHGQGRVEEQKTLSVKVPAGVDTGDRIRLTGEGEAGSMGGPAGDLYVVVNVREHPIFQRDGKHLYCEVPISFADAALGGELEVPTLDGRVKLKIPESTQTGKLFRLRGKGVAPVRGGGAGDLMCKVVVETPVNLDKRQRELLEEFRKSLQSDTSHSPKASGWFEGMKRFFDDL.

In terms of domain architecture, J spans 5–70 (DFYEVLGVER…SKRAAYDQYG (66 aa)). Residues 136 to 214 (GTTVTIRVPT…CHGQGRVEEQ (79 aa)) form a CR-type zinc finger. Cys149, Cys152, Cys166, Cys169, Cys188, Cys191, Cys202, and Cys205 together coordinate Zn(2+). CXXCXGXG motif repeat units lie at residues 149–156 (CKTCNGSG), 166–173 (CTTCGGIG), 188–195 (CPRCHGTG), and 202–209 (CGSCHGQG).

It belongs to the DnaJ family. As to quaternary structure, homodimer. The cofactor is Zn(2+).

It is found in the cytoplasm. Functionally, participates actively in the response to hyperosmotic and heat shock by preventing the aggregation of stress-denatured proteins and by disaggregating proteins, also in an autonomous, DnaK-independent fashion. Unfolded proteins bind initially to DnaJ; upon interaction with the DnaJ-bound protein, DnaK hydrolyzes its bound ATP, resulting in the formation of a stable complex. GrpE releases ADP from DnaK; ATP binding to DnaK triggers the release of the substrate protein, thus completing the reaction cycle. Several rounds of ATP-dependent interactions between DnaJ, DnaK and GrpE are required for fully efficient folding. Also involved, together with DnaK and GrpE, in the DNA replication of plasmids through activation of initiation proteins. In Pseudomonas paraeruginosa (strain DSM 24068 / PA7) (Pseudomonas aeruginosa (strain PA7)), this protein is Chaperone protein DnaJ.